Consider the following 337-residue polypeptide: Phenylalanine--tRNA ligase alpha subunit (337 aa).

E258 is a Mg(2+) binding site.

This sequence belongs to the class-II aminoacyl-tRNA synthetase family. Phe-tRNA synthetase alpha subunit type 1 subfamily. As to quaternary structure, tetramer of two alpha and two beta subunits. Mg(2+) serves as cofactor.

The protein localises to the cytoplasm. It carries out the reaction tRNA(Phe) + L-phenylalanine + ATP = L-phenylalanyl-tRNA(Phe) + AMP + diphosphate + H(+). This chain is Phenylalanine--tRNA ligase alpha subunit, found in Paraburkholderia phytofirmans (strain DSM 17436 / LMG 22146 / PsJN) (Burkholderia phytofirmans).